We begin with the raw amino-acid sequence, 573 residues long: Proline--tRNA ligase (573 aa).

It belongs to the class-II aminoacyl-tRNA synthetase family. ProS type 1 subfamily. Homodimer.

Its subcellular location is the cytoplasm. The catalysed reaction is tRNA(Pro) + L-proline + ATP = L-prolyl-tRNA(Pro) + AMP + diphosphate. Catalyzes the attachment of proline to tRNA(Pro) in a two-step reaction: proline is first activated by ATP to form Pro-AMP and then transferred to the acceptor end of tRNA(Pro). As ProRS can inadvertently accommodate and process non-cognate amino acids such as alanine and cysteine, to avoid such errors it has two additional distinct editing activities against alanine. One activity is designated as 'pretransfer' editing and involves the tRNA(Pro)-independent hydrolysis of activated Ala-AMP. The other activity is designated 'posttransfer' editing and involves deacylation of mischarged Ala-tRNA(Pro). The misacylated Cys-tRNA(Pro) is not edited by ProRS. The sequence is that of Proline--tRNA ligase from Moorella thermoacetica (strain ATCC 39073 / JCM 9320).